Here is a 323-residue protein sequence, read N- to C-terminus: MDAILEILDPYVFDYGYAYLFPQQTTQPSYGNSTGFAPSSASKNFDDEYSLNFGSSLPRDDIYRQSASILMIAGFGAAFIYVISAALSYYFVFDRRLEHHPRFLKNQIKQEIQSSFFAIPIIDLLTLPFFLGEVRGHSLLYTNIDEYGWSWLAISTILYMVFNDLGIYWIHRLEHHPSIYKYVHKPHHKWIVPTPWAAIAFHPVDGYVQSVPYHVFVYLCPMQKHLYMFLFVCVQIWTILIHDGDMITGHWLERFINSPAHHTLHHMYFTCNYGQYFTWADNYWGSHRAPMPELDPIHEAIRVMQEKGLADKDGNPIEKSKSE.

3 consecutive transmembrane segments (helical) span residues 67–87 (ASILMIAGFGAAFIYVISAAL), 112–132 (IQSSFFAIPIIDLLTLPFFLG), and 150–170 (SWLAISTILYMVFNDLGIYWI). Positions 157 to 285 (ILYMVFNDLG…YFTWADNYWG (129 aa)) constitute a Fatty acid hydroxylase domain. The Histidine box-1 signature appears at 171-175 (HRLEH). The Histidine box-2 signature appears at 184 to 188 (HKPHH). Positions 262–266 (HTLHH) match the Histidine box-3 motif.

The protein belongs to the sterol desaturase family.

Its subcellular location is the endoplasmic reticulum membrane. The catalysed reaction is episterol + 2 Fe(II)-[cytochrome b5] + O2 + 2 H(+) = 5-dehydroepisterol + 2 Fe(III)-[cytochrome b5] + 2 H2O. Its pathway is steroid metabolism; ergosterol biosynthesis. Its function is as follows. C-5 sterol desaturase; part of the third module of ergosterol biosynthesis pathway that includes the late steps of the pathway. ERG3A and ERG3BB catalyze the introduction of a C-5 double bond in the B ring to produce 5-dehydroepisterol. The third module or late pathway involves the ergosterol synthesis itself through consecutive reactions that mainly occur in the endoplasmic reticulum (ER) membrane. Firstly, the squalene synthase ERG9 catalyzes the condensation of 2 farnesyl pyrophosphate moieties to form squalene, which is the precursor of all steroids. Squalene synthase is crucial for balancing the incorporation of farnesyl diphosphate (FPP) into sterol and nonsterol isoprene synthesis. Secondly, squalene is converted into lanosterol by the consecutive action of the squalene epoxidase ERG1 and the lanosterol synthase ERG7. Then, the delta(24)-sterol C-methyltransferase ERG6 methylates lanosterol at C-24 to produce eburicol. Eburicol is the substrate of the sterol 14-alpha demethylase encoded by CYP51A, CYP51B and CYP51C, to yield 4,4,24-trimethyl ergosta-8,14,24(28)-trienol. CYP51B encodes the enzyme primarily responsible for sterol 14-alpha-demethylation, and plays an essential role in ascospore formation. CYP51A encodes an additional sterol 14-alpha-demethylase, induced on ergosterol depletion and responsible for the intrinsic variation in azole sensitivity. The third CYP51 isoform, CYP51C, does not encode a sterol 14-alpha-demethylase, but is required for full virulence on host wheat ears. The C-14 reductase ERG24 then reduces the C14=C15 double bond which leads to 4,4-dimethylfecosterol. A sequence of further demethylations at C-4, involving the C-4 demethylation complex containing the C-4 methylsterol oxidases ERG25, the sterol-4-alpha-carboxylate 3-dehydrogenase ERG26 and the 3-keto-steroid reductase ERG27, leads to the production of fecosterol via 4-methylfecosterol. ERG28 has a role as a scaffold to help anchor ERG25, ERG26 and ERG27 to the endoplasmic reticulum. The C-8 sterol isomerase ERG2 then catalyzes the reaction which results in unsaturation at C-7 in the B ring of sterols and thus converts fecosterol to episterol. The sterol-C5-desaturases ERG3A and ERG3BB then catalyze the introduction of a C-5 double bond in the B ring to produce 5-dehydroepisterol. The C-22 sterol desaturases ERG5A and ERG5B further convert 5-dehydroepisterol into ergosta-5,7,22,24(28)-tetraen-3beta-ol by forming the C-22(23) double bond in the sterol side chain. Finally, ergosta-5,7,22,24(28)-tetraen-3beta-ol is substrate of the C-24(28) sterol reductase ERG4 to produce ergosterol. This is Delta(7)-sterol 5(6)-desaturase ERG3B from Gibberella zeae (strain ATCC MYA-4620 / CBS 123657 / FGSC 9075 / NRRL 31084 / PH-1) (Wheat head blight fungus).